The sequence spans 138 residues: Gas vesicle protein A (138 aa).

The tract at residues 74-138 (EAGPRKDPGL…STSRKKEEQE (65 aa)) is disordered. A compositionally biased stretch (low complexity) spans 116 to 129 (GSSSGSSSGSSSRS).

It belongs to the gas vesicle GvpA family. The gas vesicle shell is 2 nm thick and consists of a single layer of this protein. It forms helical ribs nearly perpendicular to the long axis of the vesicle.

The protein localises to the gas vesicle shell. Gas vesicles are hollow, gas filled proteinaceous nanostructures found in some microorganisms. During planktonic growth they allow positioning of the organism at a favorable depth for light or nutrient acquisition. GvpA forms the protein shell. It is not clear what function gas vesicles perform in soil bacteria. The chain is Gas vesicle protein A from Streptomyces sp. (strain CB03234).